Here is a 353-residue protein sequence, read N- to C-terminus: Phosphate acyltransferase (353 aa).

It belongs to the PlsX family. Homodimer. Probably interacts with PlsY.

Its subcellular location is the cytoplasm. It catalyses the reaction a fatty acyl-[ACP] + phosphate = an acyl phosphate + holo-[ACP]. It functions in the pathway lipid metabolism; phospholipid metabolism. Functionally, catalyzes the reversible formation of acyl-phosphate (acyl-PO(4)) from acyl-[acyl-carrier-protein] (acyl-ACP). This enzyme utilizes acyl-ACP as fatty acyl donor, but not acyl-CoA. The sequence is that of Phosphate acyltransferase from Rhodopseudomonas palustris (strain ATCC BAA-98 / CGA009).